The primary structure comprises 314 residues: Glutathione synthetase (314 aa).

Residues 125–311 (EKIAAQLFPQ…IAGQLFDAIE (187 aa)) enclose the ATP-grasp domain. 151 to 208 (FVQKQEQAILKPLDGMGGHSIFRSSNGDPNLNVILETLTDGGRTLAIAQRYLQQIIEG) is an ATP binding site. 2 residues coordinate Mg(2+): Glu-282 and Asn-284.

Belongs to the prokaryotic GSH synthase family. It depends on Mg(2+) as a cofactor. The cofactor is Mn(2+).

The catalysed reaction is gamma-L-glutamyl-L-cysteine + glycine + ATP = glutathione + ADP + phosphate + H(+). It participates in sulfur metabolism; glutathione biosynthesis; glutathione from L-cysteine and L-glutamate: step 2/2. In Xylella fastidiosa (strain Temecula1 / ATCC 700964), this protein is Glutathione synthetase.